The chain runs to 424 residues: D-inositol 3-phosphate glycosyltransferase (424 aa).

1D-myo-inositol 3-phosphate is bound at residue His-20. Residues 26-27 (QP) and Gly-34 contribute to the UDP-N-acetyl-alpha-D-glucosamine site. Residues 31-36 (DAGGMN), Lys-89, Tyr-122, Thr-146, and Arg-166 each bind 1D-myo-inositol 3-phosphate. The UDP-N-acetyl-alpha-D-glucosamine site is built by Arg-240, Lys-245, and Met-306. 3 residues coordinate Mg(2+): Tyr-315, Arg-316, and Ala-318. UDP-N-acetyl-alpha-D-glucosamine-binding residues include Glu-328 and Glu-336. Thr-342 provides a ligand contact to Mg(2+).

The protein belongs to the glycosyltransferase group 1 family. MshA subfamily. Homodimer.

The catalysed reaction is 1D-myo-inositol 3-phosphate + UDP-N-acetyl-alpha-D-glucosamine = 1D-myo-inositol 2-acetamido-2-deoxy-alpha-D-glucopyranoside 3-phosphate + UDP + H(+). Functionally, catalyzes the transfer of a N-acetyl-glucosamine moiety to 1D-myo-inositol 3-phosphate to produce 1D-myo-inositol 2-acetamido-2-deoxy-glucopyranoside 3-phosphate in the mycothiol biosynthesis pathway. The polypeptide is D-inositol 3-phosphate glycosyltransferase (Kribbella flavida (strain DSM 17836 / JCM 10339 / NBRC 14399)).